The following is a 154-amino-acid chain: MYPGMLSEKRTNALPRGEIARGKSAVSRLFSQGGRLKGGFLLLIYSASRPVEQAPRIPVRVLFTVGKKLVPRAVDRNRIKRLMREAYRLEKNILTRALAFDAGKGDHQVMLAFLYRARADAIPSLERFRAEIRHMLKNLLSNRLPQTREGDRIE.

Belongs to the RnpA family. As to quaternary structure, consists of a catalytic RNA component (M1 or rnpB) and a protein subunit.

The enzyme catalyses Endonucleolytic cleavage of RNA, removing 5'-extranucleotides from tRNA precursor.. Functionally, RNaseP catalyzes the removal of the 5'-leader sequence from pre-tRNA to produce the mature 5'-terminus. It can also cleave other RNA substrates such as 4.5S RNA. The protein component plays an auxiliary but essential role in vivo by binding to the 5'-leader sequence and broadening the substrate specificity of the ribozyme. The sequence is that of Ribonuclease P protein component from Chlorobaculum tepidum (strain ATCC 49652 / DSM 12025 / NBRC 103806 / TLS) (Chlorobium tepidum).